A 107-amino-acid chain; its full sequence is Small polypeptide DEVIL 9 (107 aa).

Positions 1–12 (MDEKWRLSKKDA) are enriched in basic and acidic residues. The interval 1–79 (MDEKWRLSKK…EKGSITQKYS (79 aa)) is disordered. A helical transmembrane segment spans residues 9–29 (KKDALAASCSSSSTSSKSKFS). Residues 13 to 65 (LAASCSSSSTSSKSKFSRSFSTSASSSKAPAFVRSSSTKCSVPSSSSSSISRS) are compositionally biased toward low complexity. Residues 73-104 (SITQKYSSLAKEQKGRFYIMRRCVAMLVCWHK) are required for DVL/RTFL small polypeptide activity.

This sequence belongs to the DVL/RTFL small polypeptides family.

It is found in the cell membrane. Functionally, small polypeptide acting as a regulatory molecule which coordinates cellular responses required for differentiation, growth and development, probably by restricting polar cell proliferation in lateral organs and coordinating socket cell recruitment and differentiation at trichome sites. This Arabidopsis thaliana (Mouse-ear cress) protein is Small polypeptide DEVIL 9.